The chain runs to 2032 residues: Transient receptor potential channel (2032 aa).

Basic residues predominate over residues 129 to 139; it reads KKTRKHRRRRS. 5 disordered regions span residues 129–162, 197–223, 831–860, 912–945, and 1120–1211; these read KKTR…GHAI, QSKG…AVPT, KKAM…MGGV, ANPM…GSQT, and AAEH…EAGN. Composition is skewed to polar residues over residues 839–855, 935–945, and 1120–1129; these read SRPS…QSTE, SLTSASDGSQT, and AAEHQNDMNY. The span at 1130-1149 shows a compositional bias: low complexity; that stretch reads SSSSSSSSSSSSSSSSSDSS. Polar residues predominate over residues 1171–1185; the sequence is TSQGSAQSLNITSLF. Transmembrane regions (helical) follow at residues 1310 to 1330, 1332 to 1352, 1374 to 1394, 1439 to 1459, and 1535 to 1555; these read FWSW…TLLV, TPPR…AFGL, VCSF…VGFF, MIQN…SFGL, and LMTF…IAIF. Disordered stretches follow at residues 1753 to 1779, 1853 to 1909, 1935 to 1982, and 1999 to 2032; these read GTDP…RIRR, HPER…SRDQ, EEED…EEVD, and LNEE…CSDV. Residues 1935-1947 show a composition bias toward acidic residues; it reads EEEDEEEDDEEDD. The segment covering 1951–1962 has biased composition (basic residues); it reads RHHIHPRRKSSR. Polar residues predominate over residues 2016 to 2032; it reads SPSSSRADLTSQKCSDV.

Belongs to the transient receptor (TC 1.A.4) family. LTrpC subfamily. In terms of tissue distribution, gonads.

The protein resides in the membrane. In terms of biological role, required for initiation and continuation of postembryonic mitotic cell divisions of gonadal cells Z1 and Z4. Zygotic expression is necessary for hermaphrodite fertility. May be a cation channel. The sequence is that of Transient receptor potential channel (gon-2) from Caenorhabditis elegans.